The following is a 465-amino-acid chain: WAS protein family homolog 2 (465 aa).

The segment at 1-54 (MTPVRMQHSLAGQTYAVPLIQPDLRREEAVQQMADALQYLQKVSGDIFSRISQQ) is required for WASH complex assembly. The tract at residues 1 to 167 (MTPVRMQHSL…EGLGGLPSNI (167 aa)) is WHD1. Lys220 is covalently cross-linked (Glycyl lysine isopeptide (Lys-Gly) (interchain with G-Cter in ubiquitin)). Disordered regions lie at residues 297–407 (QDGV…QGGH) and 422–465 (GISG…DWES). Residues 302–314 (TPPPPPPPPPPAP) show a composition bias toward pro residues. Residues 349–465 (QGAPREVVDP…AEEDEDDWES (117 aa)) are VCA. Positions 361–383 (GRATLLESIRQAGGIGKAKLRSM) constitute a WH2 domain. The span at 382–398 (SMKERKLEKKKQKEQEQ) shows a compositional bias: basic and acidic residues. Residues 424–436 (SGKGPGAGEGPGG) are compositionally biased toward gly residues. Residues 456-465 (AEEDEDDWES) are compositionally biased toward acidic residues.

It belongs to the WASH1 family. In terms of assembly, component of the WASH core complex also described as WASH regulatory complex (SHRC) composed of WASH (WASHC1, WASH2P or WASH3P), WASHC2 (WASHC2A or WASHC2C), WASHC3, WASHC4 and WASHC5. The WASH core complex associates with the F-actin-capping protein dimer (formed by CAPZA1, CAPZA2 or CAPZA3 and CAPZB) in a transient or substoichiometric manner which was initially described as WASH complex. Interacts (via WHD1 region) with WASHC2C; the interaction is direct. Interacts with alpha-tubulin. Interacts with BECN1; WASHC1 and AMBRA1 can competitively interact with BECN1. Interacts with BLOC1S2; may associate with the BLOC-1 complex. Interacts with tubulin gamma chain (TUBG1 or TUBG2). Interacts with EXOC1, EXOC4, EXOC8; in MMP14-positive endosomes in breast tumor cells; indicative for an association with the exocyst complex.

It is found in the early endosome membrane. The protein resides in the recycling endosome membrane. It localises to the late endosome. The protein localises to the cytoplasmic vesicle. Its subcellular location is the autophagosome. It is found in the cytoplasm. The protein resides in the cytoskeleton. It localises to the microtubule organizing center. The protein localises to the centrosome. Its subcellular location is the centriole. Functionally, acts as a nucleation-promoting factor at the surface of endosomes, where it recruits and activates the Arp2/3 complex to induce actin polymerization, playing a key role in the fission of tubules that serve as transport intermediates during endosome sorting. Involved in endocytic trafficking of EGF. Involved in transferrin receptor recycling. Regulates the trafficking of endosomal alpha5beta1 integrin to the plasma membrane and involved in invasive cell migration. In T-cells involved in endosome-to-membrane recycling of receptors including T-cell receptor (TCR), CD28 and ITGAL; proposed to be implicated in T-cell proliferation and effector function. In dendritic cells involved in endosome-to-membrane recycling of major histocompatibility complex (MHC) class II probably involving retromer and subsequently allowing antigen sampling, loading and presentation during T-cell activation. Involved in Arp2/3 complex-dependent actin assembly driving Salmonella typhimurium invasion independent of ruffling. Involved in the exocytosis of MMP14 leading to matrix remodeling during invasive migration and implicating late endosome-to-plasma membrane tubular connections and cooperation with the exocyst complex. Involved in negative regulation of autophagy independently from its role in endosomal sorting by inhibiting BECN1 ubiquitination to inactivate PIK3C3/Vps34 activity. The polypeptide is WAS protein family homolog 2 (WASH2P) (Homo sapiens (Human)).